A 194-amino-acid polypeptide reads, in one-letter code: 5'-deoxynucleotidase PBPRA2627 (194 aa).

Substrate is bound by residues 18-19 and H33; that span reads RW. Positions 30-142 constitute an HD domain; the sequence is ISEHSLQVAF…VKQADSLCAY (113 aa). A divalent metal cation-binding residues include H33, H68, and D69. Substrate is bound by residues D69, 77 to 80, and D137; that span reads DMPT. Residue D137 participates in a divalent metal cation binding.

This sequence belongs to the 5DNU family. As to quaternary structure, homodimer. A divalent metal cation serves as cofactor.

The protein resides in the cytoplasm. The catalysed reaction is a 2'-deoxyribonucleoside 5'-phosphate + H2O = a 2'-deoxyribonucleoside + phosphate. Catalyzes the strictly specific dephosphorylation of 2'-deoxyribonucleoside 5'-monophosphates. The chain is 5'-deoxynucleotidase PBPRA2627 from Photobacterium profundum (strain SS9).